The chain runs to 121 residues: MSWNHNRRWKDFQALVNAEDYFAFFELPYDPRVVNVNRLHILRKFAQYLAPLEHFQGSEEEWLEQARQALEKAYQTFLTSTPQQEKLFRVFQDYGCPDPVGGCAGCSSSGERGECSPGIPA.

It belongs to the NifW family. As to quaternary structure, homotrimer; associates with NifD.

Functionally, may protect the nitrogenase Fe-Mo protein from oxidative damage. This is Nitrogenase-stabilizing/protective protein NifW from Synechococcus sp. (strain JA-2-3B'a(2-13)) (Cyanobacteria bacterium Yellowstone B-Prime).